The following is a 285-amino-acid chain: V-type proton ATPase subunit D (285 aa).

The span at 208-226 shows a compositional bias: basic and acidic residues; it reads QKTKENAEKADSVTKEEHQ. The segment at 208–285 is disordered; that stretch reads QKTKENAEKA…ENDSDEEVIF (78 aa). A Phosphoserine modification is found at S219. Over residues 227 to 236 the composition is skewed to polar residues; that stretch reads GGSNTLQQTK. Residues 248–263 are compositionally biased toward basic and acidic residues; sequence VGKEVINEVENSKDDT. The span at 271–285 shows a compositional bias: acidic residues; the sequence is TDDEEENDSDEEVIF.

It belongs to the V-ATPase D subunit family. V-ATPase is a heteromultimeric enzyme composed of a peripheral catalytic V1 complex (components A to H) attached to an integral membrane V0 proton pore complex (components: a, c, c', c'', d, e, f and VOA1).

The protein resides in the vacuole membrane. Its function is as follows. Subunit of the V1 complex of vacuolar(H+)-ATPase (V-ATPase), a multisubunit enzyme composed of a peripheral complex (V1) that hydrolyzes ATP and a membrane integral complex (V0) that translocates protons. V-ATPase is responsible for acidifying and maintaining the pH of intracellular compartments. The polypeptide is V-type proton ATPase subunit D (vma8) (Schizosaccharomyces pombe (strain 972 / ATCC 24843) (Fission yeast)).